We begin with the raw amino-acid sequence, 408 residues long: Translation initiation factor 2 subunit gamma (408 aa).

The tr-type G domain maps to 4–201 (QSEINIGLVG…TIEERIKTPK (198 aa)). The tract at residues 13-20 (GHVDHGKT) is G1. The Mg(2+) site is built by Asp16, Thr20, Gly41, and Ser43. 16-21 (DHGKTT) is a GTP binding site. The tract at residues 41-45 (GISIR) is G2. Zn(2+) contacts are provided by Cys56, Cys59, Cys71, and Cys74. A G3 region spans residues 88-91 (DAPG). GTP contacts are provided by residues 144–147 (NKID) and 179–181 (SAQ). The tract at residues 144–147 (NKID) is G4. Positions 179–181 (SAQ) are G5.

The protein belongs to the TRAFAC class translation factor GTPase superfamily. Classic translation factor GTPase family. EIF2G subfamily. Heterotrimer composed of an alpha, a beta and a gamma chain. It depends on Mg(2+) as a cofactor.

The enzyme catalyses GTP + H2O = GDP + phosphate + H(+). Functionally, eIF-2 functions in the early steps of protein synthesis by forming a ternary complex with GTP and initiator tRNA. In Methanothermobacter thermautotrophicus (strain ATCC 29096 / DSM 1053 / JCM 10044 / NBRC 100330 / Delta H) (Methanobacterium thermoautotrophicum), this protein is Translation initiation factor 2 subunit gamma.